The sequence spans 364 residues: tRNA 2-selenouridine synthase (364 aa).

Residues 14–137 (LIADTPIIDV…LRQTTIQATI (124 aa)) form the Rhodanese domain. The active-site S-selanylcysteine intermediate is cysteine 97.

Belongs to the SelU family. In terms of assembly, monomer.

It catalyses the reaction 5-methylaminomethyl-2-thiouridine(34) in tRNA + selenophosphate + (2E)-geranyl diphosphate + H2O + H(+) = 5-methylaminomethyl-2-selenouridine(34) in tRNA + (2E)-thiogeraniol + phosphate + diphosphate. It carries out the reaction 5-methylaminomethyl-2-thiouridine(34) in tRNA + (2E)-geranyl diphosphate = 5-methylaminomethyl-S-(2E)-geranyl-thiouridine(34) in tRNA + diphosphate. The catalysed reaction is 5-methylaminomethyl-S-(2E)-geranyl-thiouridine(34) in tRNA + selenophosphate + H(+) = 5-methylaminomethyl-2-(Se-phospho)selenouridine(34) in tRNA + (2E)-thiogeraniol. The enzyme catalyses 5-methylaminomethyl-2-(Se-phospho)selenouridine(34) in tRNA + H2O = 5-methylaminomethyl-2-selenouridine(34) in tRNA + phosphate. In terms of biological role, involved in the post-transcriptional modification of the uridine at the wobble position (U34) of tRNA(Lys), tRNA(Glu) and tRNA(Gln). Catalyzes the conversion of 2-thiouridine (S2U-RNA) to 2-selenouridine (Se2U-RNA). Acts in a two-step process involving geranylation of 2-thiouridine (S2U) to S-geranyl-2-thiouridine (geS2U) and subsequent selenation of the latter derivative to 2-selenouridine (Se2U) in the tRNA chain. The protein is tRNA 2-selenouridine synthase of Escherichia coli (strain 55989 / EAEC).